A 41-amino-acid polypeptide reads, in one-letter code: Large ribosomal subunit protein bL36B (41 aa).

It belongs to the bacterial ribosomal protein bL36 family.

This Haemophilus ducreyi (strain 35000HP / ATCC 700724) protein is Large ribosomal subunit protein bL36B.